The sequence spans 128 residues: Large ribosomal subunit protein bL21 (128 aa).

Positions 104–128 are disordered; sequence GKKPSVGPRPKRVKAEPAPAADAAE. The segment covering 119–128 has biased composition (low complexity); the sequence is EPAPAADAAE.

The protein belongs to the bacterial ribosomal protein bL21 family. Part of the 50S ribosomal subunit. Contacts protein L20.

Its function is as follows. This protein binds to 23S rRNA in the presence of protein L20. This Rhodopseudomonas palustris (strain BisB5) protein is Large ribosomal subunit protein bL21.